The sequence spans 497 residues: Bifunctional protein GlmU (497 aa).

The tract at residues 1 to 252 (MSQPSARPSA…VWEVEGANDR (252 aa)) is pyrophosphorylase. UDP-N-acetyl-alpha-D-glucosamine is bound by residues 14–17 (LAAG), Lys-28, Gln-86, 91–92 (GT), 115–117 (YGD), Gly-154, Glu-169, Asn-192, and Asn-250. Residue Asp-117 participates in Mg(2+) binding. Position 250 (Asn-250) interacts with Mg(2+). A linker region spans residues 253 to 273 (RQLSDLGRRLNERVLRHWMKE). Residues 274–497 (GVTVVDPSST…AGAEGSGAQG (224 aa)) are N-acetyltransferase. UDP-N-acetyl-alpha-D-glucosamine-binding residues include Arg-355 and Lys-373. The Proton acceptor role is filled by His-385. UDP-N-acetyl-alpha-D-glucosamine is bound by residues Tyr-388 and Asn-399. Residues 408–409 (NY), Ser-427, and Ala-445 each bind acetyl-CoA. The segment at 473–497 (PAKRPGTSSAEAARAAGAEGSGAQG) is disordered. A compositionally biased stretch (low complexity) spans 480 to 490 (SSAEAARAAGA).

It in the N-terminal section; belongs to the N-acetylglucosamine-1-phosphate uridyltransferase family. This sequence in the C-terminal section; belongs to the transferase hexapeptide repeat family. As to quaternary structure, homotrimer. Mg(2+) is required as a cofactor.

It is found in the cytoplasm. It catalyses the reaction alpha-D-glucosamine 1-phosphate + acetyl-CoA = N-acetyl-alpha-D-glucosamine 1-phosphate + CoA + H(+). The enzyme catalyses N-acetyl-alpha-D-glucosamine 1-phosphate + UTP + H(+) = UDP-N-acetyl-alpha-D-glucosamine + diphosphate. It participates in nucleotide-sugar biosynthesis; UDP-N-acetyl-alpha-D-glucosamine biosynthesis; N-acetyl-alpha-D-glucosamine 1-phosphate from alpha-D-glucosamine 6-phosphate (route II): step 2/2. Its pathway is nucleotide-sugar biosynthesis; UDP-N-acetyl-alpha-D-glucosamine biosynthesis; UDP-N-acetyl-alpha-D-glucosamine from N-acetyl-alpha-D-glucosamine 1-phosphate: step 1/1. It functions in the pathway bacterial outer membrane biogenesis; LPS lipid A biosynthesis. Functionally, catalyzes the last two sequential reactions in the de novo biosynthetic pathway for UDP-N-acetylglucosamine (UDP-GlcNAc). The C-terminal domain catalyzes the transfer of acetyl group from acetyl coenzyme A to glucosamine-1-phosphate (GlcN-1-P) to produce N-acetylglucosamine-1-phosphate (GlcNAc-1-P), which is converted into UDP-GlcNAc by the transfer of uridine 5-monophosphate (from uridine 5-triphosphate), a reaction catalyzed by the N-terminal domain. This Micrococcus luteus (strain ATCC 4698 / DSM 20030 / JCM 1464 / CCM 169 / CCUG 5858 / IAM 1056 / NBRC 3333 / NCIMB 9278 / NCTC 2665 / VKM Ac-2230) (Micrococcus lysodeikticus) protein is Bifunctional protein GlmU.